Consider the following 90-residue polypeptide: Small ribosomal subunit protein uS19 (90 aa).

Belongs to the universal ribosomal protein uS19 family.

Its function is as follows. Protein S19 forms a complex with S13 that binds strongly to the 16S ribosomal RNA. The protein is Small ribosomal subunit protein uS19 of Mesomycoplasma hyopneumoniae (strain 232) (Mycoplasma hyopneumoniae).